The sequence spans 158 residues: Urease subunit beta (158 aa).

Residues 113–158 (EDDWRRSSAAGDAPQELPQVEAAERGRKLDEATDVGTEDTPEEGQN) form a disordered region. Residues 134-143 (AAERGRKLDE) are compositionally biased toward basic and acidic residues. The segment covering 144–158 (ATDVGTEDTPEEGQN) has biased composition (acidic residues).

The protein belongs to the urease beta subunit family. As to quaternary structure, heterotrimer of UreA (gamma), UreB (beta) and UreC (alpha) subunits. Three heterotrimers associate to form the active enzyme.

The protein localises to the cytoplasm. It carries out the reaction urea + 2 H2O + H(+) = hydrogencarbonate + 2 NH4(+). The protein operates within nitrogen metabolism; urea degradation; CO(2) and NH(3) from urea (urease route): step 1/1. In Corynebacterium glutamicum (strain R), this protein is Urease subunit beta.